We begin with the raw amino-acid sequence, 70 residues long: Cold shock-like protein CspF (70 aa).

The 61-residue stretch at Gly7–Val67 folds into the CSD domain.

It localises to the cytoplasm. In Escherichia coli (strain K12), this protein is Cold shock-like protein CspF (cspF).